We begin with the raw amino-acid sequence, 618 residues long: Poly(A)-specific ribonuclease PARN-like (618 aa).

Residues Ser54, Gln56, Asp332, and Asn418 each coordinate a divalent metal cation. Positions 588–607 are disordered; it reads ALESSDTDPDSDTKPSEIDW.

The protein belongs to the CAF1 family. Requires a divalent metal cation as cofactor.

The protein localises to the nucleus. It is found in the cytoplasm. The catalysed reaction is Exonucleolytic cleavage of poly(A) to 5'-AMP.. Its function is as follows. 3'-exoribonuclease that has a preference for poly(A) tails of mRNAs, thereby efficiently degrading poly(A) tails. Exonucleolytic degradation of the poly(A) tail is often the first step in the decay of eukaryotic mRNAs. This chain is Poly(A)-specific ribonuclease PARN-like, found in Arabidopsis thaliana (Mouse-ear cress).